The following is a 310-amino-acid chain: MAKIVVALGGNALGKSPQEQLKLVKNTAKSLVGLITKGHEIVISHGNGPQVGSINLGLNYAAEHNQGPAFPFAECGAMSQAYIGYQLQESLQNELHSIGMDKQVVTLVTQVEVDENDPAFNNPSKPIGLFYNKEEAEQIQKEKGFTFVEDAGRGYRRVVPSPQPISIIELESIKTLIKNDTLVIAAGGGGIPVIREQHDGFKGIDAVIDKDKTSALLGANIQCDQLIILTAIDYVYINFNTENQQPLKTTNVDELKRYIDENQFAKGSMLPKIEAAISFIENNPKGSVLITSLNELDAALEGKVGTVIKK.

It belongs to the carbamate kinase family.

It localises to the cytoplasm. The catalysed reaction is hydrogencarbonate + NH4(+) + ATP = carbamoyl phosphate + ADP + H2O + H(+). It functions in the pathway metabolic intermediate metabolism; carbamoyl phosphate degradation; CO(2) and NH(3) from carbamoyl phosphate: step 1/1. This chain is Carbamate kinase 1 (arcC1), found in Staphylococcus aureus (strain MRSA252).